The following is a 409-amino-acid chain: Nucleoprotein (409 aa).

Disordered stretches follow at residues 1-32, 44-63, 120-145, and 164-193; these read MASGKTTGKTDAPAPVIKLGGPKPPKVGSSGN, LNSPPPKFEGSGVPDNENLK, GADTKSRSNQGTRDPDKFDQYPLRFS, and RSGRSTAASSAASSRAPSRDGSRGRRSGAE. A compositionally biased stretch (low complexity) spans 15–31; it reads PVIKLGGPKPPKVGSSG. Residues 29–160 are RNA-binding; it reads SSGNASWFQA…GNFRWDFIPI (132 aa). The CoV N NTD domain maps to 31–156; sequence GNASWFQALK…GGPDGNFRWD (126 aa). Positions 164-179 are enriched in low complexity; that stretch reads RSGRSTAASSAASSRA. Residues 180 to 192 are compositionally biased toward basic and acidic residues; the sequence is PSRDGSRGRRSGA. S190 is modified (phosphoserine; by host). Residues 215–331 form the CoV N CTD domain; sequence TKAKADEMAH…QCVDGVGTRP (117 aa). The dimerization stretch occupies residues 226-333; it reads RYCKRTIPPG…VDGVGTRPKD (108 aa). A disulfide bridge connects residues C320 and C323. The interval 327–409 is disordered; the sequence is VGTRPKDDEP…GESALGENEL (83 aa). Polar residues predominate over residues 341-355; it reads RPNSRPATRTSSPAP. Residues 368–384 show a composition bias toward basic and acidic residues; that stretch reads KQDDEVDKALTSDEERN. T378 is modified (phosphothreonine; by host). S379 bears the Phosphoserine; by host mark.

The protein belongs to the gammacoronavirus nucleocapsid protein family. Homooligomer. Both monomeric and oligomeric forms interact with RNA. Interacts with protein M. Interacts with NSP3; this interaction serves to tether the genome to the newly translated replicase-transcriptase complex at a very early stage of infection. ADP-ribosylated. The ADP-ribosylation is retained in the virion during infection. In terms of processing, phosphorylated on serine and threonine residues.

Its subcellular location is the virion. The protein localises to the host endoplasmic reticulum-Golgi intermediate compartment. The protein resides in the host Golgi apparatus. Its function is as follows. Packages the positive strand viral genome RNA into a helical ribonucleocapsid (RNP) and plays a fundamental role during virion assembly through its interactions with the viral genome and membrane protein M. Plays an important role in enhancing the efficiency of subgenomic viral RNA transcription as well as viral replication. The polypeptide is Nucleoprotein (Avian infectious bronchitis virus (strain D1466) (IBV)).